A 642-amino-acid chain; its full sequence is Threonine--tRNA ligase (642 aa).

The TGS domain maps to 1–61 (MPVITLPDGS…ENDATLSIIT (61 aa)). The interval 243-534 (DHRKIGKQLD…LTEEFAGFFP (292 aa)) is catalytic. Zn(2+) is bound by residues C334, H385, and H511.

It belongs to the class-II aminoacyl-tRNA synthetase family. As to quaternary structure, homodimer. It depends on Zn(2+) as a cofactor.

The protein localises to the cytoplasm. The catalysed reaction is tRNA(Thr) + L-threonine + ATP = L-threonyl-tRNA(Thr) + AMP + diphosphate + H(+). Its function is as follows. Catalyzes the attachment of threonine to tRNA(Thr) in a two-step reaction: L-threonine is first activated by ATP to form Thr-AMP and then transferred to the acceptor end of tRNA(Thr). Also edits incorrectly charged L-seryl-tRNA(Thr). This Salmonella heidelberg (strain SL476) protein is Threonine--tRNA ligase.